The following is a 407-amino-acid chain: Argininosuccinate synthase (407 aa).

Residues 16–24 and Ala-44 each bind ATP; that span reads AYSGGLDTS. L-citrulline is bound by residues Tyr-96 and Ser-101. Gly-126 contacts ATP. L-aspartate-binding residues include Thr-128, Asn-132, and Asp-133. L-citrulline is bound at residue Asn-132. L-citrulline-binding residues include Arg-136, Ser-185, Ser-194, Glu-270, and Tyr-282.

It belongs to the argininosuccinate synthase family. Type 1 subfamily. As to quaternary structure, homotetramer.

The protein localises to the cytoplasm. It catalyses the reaction L-citrulline + L-aspartate + ATP = 2-(N(omega)-L-arginino)succinate + AMP + diphosphate + H(+). It functions in the pathway amino-acid biosynthesis; L-arginine biosynthesis; L-arginine from L-ornithine and carbamoyl phosphate: step 2/3. This is Argininosuccinate synthase from Shewanella denitrificans (strain OS217 / ATCC BAA-1090 / DSM 15013).